Consider the following 209-residue polypeptide: Non-structural protein 5 (209 aa).

Position 86 (Asp-86) interacts with Mg(2+).

The protein belongs to the rotavirus NSP5 family. As to quaternary structure, homodimer. Interacts with VP1. Interacts with VP2. Interacts with NSP2 and NSP6. Mg(2+) serves as cofactor. Post-translationally, O-glycosylated.

It is found in the host cytoplasm. Functionally, plays an essential role in the viral genome replication. Participates, together with NSP2, in the formation of viral factories (viroplasms) which are large inclusions in the host cytoplasm where replication intermediates are assembled and viral RNA replication takes place. Orchestrates the recruitment of viroplasmic proteins such as capsid proteins to these factories. In Bos taurus (Bovine), this protein is Non-structural protein 5.